A 555-amino-acid polypeptide reads, in one-letter code: Meiotic mRNA stability protein kinase SSN3 (555 aa).

The region spanning 75–463 (YEVIGYIAAG…AFNALEHKYF (389 aa)) is the Protein kinase domain. 81 to 89 (IAAGTYGKV) contacts ATP. The span at 100–138 (TNSANGSSLNGTNAKIPQFDSTQPKSSSSMDMQANTNAL) shows a compositional bias: polar residues. The interval 100–166 (TNSANGSSLN…REDVSPHYNS (67 aa)) is disordered. Residue Lys-183 participates in ATP binding. Asp-286 serves as the catalytic Proton acceptor.

The protein belongs to the protein kinase superfamily. CMGC Ser/Thr protein kinase family. CDC2/CDKX subfamily. As to quaternary structure, component of the SRB8-11 complex which consists of SRB8, SSN2/SRB9, SSN3/SRB10 and SSN8/SRB11. The SRB8-11 complex associates with the Mediator complex. The SSN3/SRB10 and SSN8/SRB11 kinase-cyclin pair also associate with the RNA polymerase II holoenzyme. Interacts with TUP1.

Its subcellular location is the nucleus. It carries out the reaction L-seryl-[protein] + ATP = O-phospho-L-seryl-[protein] + ADP + H(+). The catalysed reaction is L-threonyl-[protein] + ATP = O-phospho-L-threonyl-[protein] + ADP + H(+). The enzyme catalyses [DNA-directed RNA polymerase] + ATP = phospho-[DNA-directed RNA polymerase] + ADP + H(+). Component of the SRB8-11 complex. The SRB8-11 complex is a regulatory module of the Mediator complex which is itself involved in regulation of basal and activated RNA polymerase II-dependent transcription. The SRB8-11 complex may be involved in the transcriptional repression of a subset of genes regulated by Mediator. It may inhibit the association of the Mediator complex with RNA polymerase II to form the holoenzyme complex. The SRB8-11 complex phosphorylates the C-terminal domain (CTD) of the largest subunit of RNA polymerase II RPB1 at serines 2 and 5. The SSN3/SRB10 and SSN8/SRB11 kinase-cyclin pair may also positively and negatively regulate numerous transcriptional activators in response to changes in nutritional and physiological conditions. Phosphorylates GCN4, promoting its ubiquitin-mediated degradation, and MSN2, promoting its nuclear exclusion. Phosphorylates STE12, thereby promoting its degradation and inhibition of filamentous growth. Phosphorylates GAL4, and this phosphorylation is required for efficient galactose-inducible transcription. Also phosphorylates BDF1 and the TAF2 subunit of the TFIID complex. This is Meiotic mRNA stability protein kinase SSN3 (SSN3) from Saccharomyces cerevisiae (strain ATCC 204508 / S288c) (Baker's yeast).